The primary structure comprises 325 residues: Reticulocalbin-1 (325 aa).

Positions 1 to 23 (MARGGRLGLALGLLLALVLALRA) are cleaved as a signal peptide. The N-linked (GlcNAc...) asparagine; partial glycan is linked to Asn-47. Phosphoserine occurs at positions 49 and 74. 6 consecutive EF-hand domains span residues 73 to 108 (ESKERLGKIVDRIDSDGDGLVTTEELKLWIKRVQKR), 109 to 144 (YIYDNVAKVWKDYDRDKDEKISWEEYKQATYGYYLG), 160 to 195 (KMLPRDERRFKASDLDGDLTATREEFTAFLHPEEFE), 197 to 232 (MKEIVVLETLEDIDKNGDGFVDQDEYIADMFSHEDN), 238 to 273 (WVLSEREQFNDFRDLNKDGKLDKDEIRHWILPQDYD), and 274 to 309 (HAQAEARHLVYESDKNKDEMLTKEEILDNWNMFVGS). Ca(2+)-binding residues include Asp-86, Asp-88, Asp-90, Glu-97, Asp-122, Asp-124, Asp-126, Lys-128, Glu-133, Asp-173, Asp-175, Asp-177, Thr-179, Glu-184, Asp-210, Asn-212, Asp-214, Glu-221, Asp-251, Asn-253, Asp-255, Lys-257, Glu-262, Asp-287, Asn-289, Asp-291, Met-293, and Glu-298. The short motif at 322–325 (HDEL) is the Prevents secretion from ER element.

This sequence belongs to the CREC family. Post-translationally, O-glycosylated. O-mannosylated by POMT1 and POMT2 and elongated by POMGNT1.

Its subcellular location is the endoplasmic reticulum lumen. Functionally, may regulate calcium-dependent activities in the endoplasmic reticulum lumen or post-ER compartment. The protein is Reticulocalbin-1 (Rcn1) of Mus musculus (Mouse).